The chain runs to 408 residues: Methyltransferase/ribosomally synthesized type I borosin cyclic peptide precursor sveMA (408 aa).

Residues 1 to 250 (MASSTHPKRG…TSSTFYIPPR (250 aa)) form a methyltransferase domain region. Residues R73, Y77, and Y99 contribute to the active site. Y99, H101, I104, A131, Q173, G211, S242, and T244 together coordinate S-adenosyl-L-methionine. Positions 251-375 (DSEAIDYDMV…GSVYKVMSAT (125 aa)) are clasp domain. A precursor leader region spans residues 371–385 (VMSATQADIELGKEP). N-methylvaline is present on V401. I402 carries the N-methylisoleucine modification. At V406 the chain carries N-methylvaline.

In the N-terminal section; belongs to the precorrin methyltransferase family. Homodimer. Post-translationally, sveMA automethylates at Val-401, Ile-402 and Val-406 before being processed by a prolyloligopeptidase which likely forms a peptidyl ester upon removal of the follower propeptide, which then undergoes macrocyclization with the N-terminus of the modified core peptide. Peptide backbone alpha-N-methylations change the physicochemical properties of amide bonds to provide structural constraints and other favorable characteristics including biological membrane permeability to peptides.

The protein operates within secondary metabolite biosynthesis. Its function is as follows. Fusion protein of the methyltransferase sveM and a type I borosin core peptide; part of the gene cluster that mediates the biosynthesis of a type I borosin, a highly methylated cyclic peptide with potent biological activities. Type I borosins derive from the C-terminus of the fusion protein, and it is the same protein that methylates its own C-terminus using S-adenosyl methionine (SAM). The C-terminus is subsequently cleaved off and macrocyclized by a prolyloligopeptidase to give the final product. The protein is Methyltransferase/ribosomally synthesized type I borosin cyclic peptide precursor sveMA of Serendipita vermifera subsp. bescii (Mycorrhizal fungus).